A 919-amino-acid chain; its full sequence is Tight junction protein ZO-3 (919 aa).

Residues 11 to 93 form the PDZ 1 domain; sequence TATLSKDPRR…MANITVKRPR (83 aa). The tract at residues 92 to 173 is disordered; sequence PRRIHLPATK…SPGGGSEANG (82 aa). Position 112 is a phosphoserine (serine 112). A compositionally biased stretch (basic and acidic residues) spans 117 to 131; that stretch reads GPQRVEEVDQGRGYD. At serine 136 the chain carries Phosphoserine. Over residues 147–163 the composition is skewed to basic residues; sequence RRPRPGRRGRAGSHGRR. Phosphoserine occurs at positions 164, 169, 203, and 319. Residues 195-272 form the PDZ 2 domain; it reads SVLVKRRDSE…KLSLLVLRDR (78 aa). Positions 279 to 377 are disordered; sequence IPPAVSDSDS…SSQSMEDRGY (99 aa). Phosphothreonine is present on threonine 325. Position 327 is a phosphoserine (serine 327). The segment covering 332 to 360 has biased composition (basic and acidic residues); that stretch reads PRLRRESSVDSRTISEPDEQRSELPRESS. A Phosphoserine modification is found at serine 371. Positions 380-446 constitute a PDZ 3 domain; sequence DTRVVRFLKG…LTREEAVQFL (67 aa). Residues 475–549 enclose the SH3 domain; the sequence is GDSFYIRTHF…PNQSRAEQLA (75 aa). A Guanylate kinase-like domain is found at 580 to 761; that stretch reads LRRGAKKTTQ…WYQELKAIIR (182 aa). Residue serine 591 is modified to Phosphoserine. Positions 791–801 are enriched in low complexity; sequence ADSSADLSCDS. Disordered regions lie at residues 791–886 and 899–919; these read ADSS…DSMR and RVHDAESSDEDGYDWGPATDL. Gly residues predominate over residues 812–828; that stretch reads EGGAYTDGEGYTDGEGG. Serine 856, serine 905, and serine 906 each carry phosphoserine.

The protein belongs to the MAGUK family. As to quaternary structure, interacts with occludin OCLN, claudins and TPJ1. Interacts with PATJ. Interacts with UBN1. Interacts with FASLG. Interacts with CCND1. Post-translationally, phosphorylated.

It is found in the cell membrane. It localises to the cell junction. The protein localises to the tight junction. The protein resides in the nucleus. Functionally, TJP1, TJP2, and TJP3 are closely related scaffolding proteins that link tight junction (TJ) transmembrane proteins such as claudins, junctional adhesion molecules, and occludin to the actin cytoskeleton. The tight junction acts to limit movement of substances through the paracellular space and as a boundary between the compositionally distinct apical and basolateral plasma membrane domains of epithelial and endothelial cells. Binds and recruits PATJ to tight junctions where it connects and stabilizes apical and lateral components of tight junctions. Promotes cell-cycle progression through the sequestration of cyclin D1 (CCND1) at tight junctions during mitosis which prevents CCND1 degradation during M-phase and enables S-phase transition. With TJP1 and TJP2, participates in the junctional retention and stability of the transcription factor DBPA, but is not involved in its shuttling to the nucleus. Contrary to TJP2, TJP3 is dispensable for individual viability, embryonic development, epithelial differentiation, and the establishment of TJs, at least in the laboratory environment. The polypeptide is Tight junction protein ZO-3 (TJP3) (Homo sapiens (Human)).